A 465-amino-acid chain; its full sequence is FeMo cofactor biosynthesis protein FixZ (465 aa).

Positions 1-36 (MSEPEIKVGKTSSALFDRAPMAPSMPGGRASSSHGL) are disordered. The 252-residue stretch at 61–312 (HHYFARMHXX…MRHCQQCRAD (252 aa)) folds into the Radical SAM core domain. Residues C75 and C79 each coordinate [4Fe-4S] cluster. Position 81 (Y81) interacts with S-adenosyl-L-methionine. C82 lines the [4Fe-4S] cluster pocket. S-adenosyl-L-methionine is bound by residues G129, T181, and I233. [4Fe-4S] cluster is bound by residues C306 and C309.

Belongs to the radical SAM superfamily. NifB family. It depends on [4Fe-4S] cluster as a cofactor.

The protein operates within cofactor biosynthesis; Fe-Mo cofactor biosynthesis. Involved in the biosynthesis of the iron-molybdenum cofactor (FeMo-co or M-cluster) found in the dinitrogenase enzyme of the nitrogenase complex in nitrogen-fixing microorganisms. Catalyzes the crucial step of radical SAM-dependent carbide insertion that occurs concomitant with the insertion of a 9th sulfur and the rearrangement/coupling of two [4Fe-4S] clusters into a [8Fe-9S-C] cluster, the precursor to the M-cluster. In Rhizobium leguminosarum, this protein is FeMo cofactor biosynthesis protein FixZ (fixZ).